A 504-amino-acid chain; its full sequence is MEPVFLFLILAFPIASVYLLFYHKKRVVGLSAPPGPPGLPFIGNFHQLYKASSTHEYLWSLSKQYGSLVTLRMGSVPILVVSSPKMAKEVLQTQDLIYCSRPAMTGMQKLSYNGLDVAFSPYTDQWRHTRKFCTLELFTQKRAQLNFRPVREQEVSRMIARLSETAAASKDVNAYEWFSNLATCIISRVAFGKRYDEDGIGKERFQRMLSEIDAMFIGFFVSDFFPMFGWIDKLSGMRDRLDRTFKDLDMFYQELIDEHLKPNRLESPTEDLIDVMLKNEGSSLTKDSMKAILLNVFNGGTGTTATVLAWAMTALLRNQGVMKKAQEEIRSVIGKKGKVDEDDFPSLPYLRAVVKETMRLYPPAPVLVPRETMESSIIGEDKDHMYMVKPKTVVYISMWAIGRDPKTWKNPMEFVPERFLERPDINYKGQQFEYVPFGAGRRICAGINLGVTTVELALANLLYTFDWEPPAGMRFEDIDDETTNGLALQKKNALYIRPKKYMFP.

Residues Met1–Phe21 traverse the membrane as a helical segment. The interval Pro363–Val368 is substrate specificity. Cys444 provides a ligand contact to heme.

The protein belongs to the cytochrome P450 family. Heme is required as a cofactor.

It localises to the microsome membrane. It functions in the pathway secondary metabolite biosynthesis. Its function is as follows. Involved in the biosynthesis of coumarins and furanocoumarins (FCs), natural products required for defense responses against attacks by predators with potential medical and agroindustrial usages such as anticoagulant, rodenticide and artificial vanilla substitutes. Able to catalyze the hydroxylation of esculetin to produce 6,7,8-trihydroxycoumarin. This is 6,7,8-trihydroxycoumarin synthase from Pastinaca sativa (Wild parsnip).